A 75-amino-acid polypeptide reads, in one-letter code: Small ribosomal subunit protein bS18 (75 aa).

Belongs to the bacterial ribosomal protein bS18 family. Part of the 30S ribosomal subunit. Forms a tight heterodimer with protein bS6.

Its function is as follows. Binds as a heterodimer with protein bS6 to the central domain of the 16S rRNA, where it helps stabilize the platform of the 30S subunit. The polypeptide is Small ribosomal subunit protein bS18 (Shewanella halifaxensis (strain HAW-EB4)).